A 325-amino-acid polypeptide reads, in one-letter code: Ferrochelatase (325 aa).

Fe cation contacts are provided by histidine 172 and glutamate 267.

The protein belongs to the ferrochelatase family.

Its subcellular location is the cytoplasm. The enzyme catalyses heme b + 2 H(+) = protoporphyrin IX + Fe(2+). Its pathway is porphyrin-containing compound metabolism; protoheme biosynthesis; protoheme from protoporphyrin-IX: step 1/1. In terms of biological role, catalyzes the ferrous insertion into protoporphyrin IX. This chain is Ferrochelatase, found in Acidobacterium capsulatum (strain ATCC 51196 / DSM 11244 / BCRC 80197 / JCM 7670 / NBRC 15755 / NCIMB 13165 / 161).